The sequence spans 455 residues: Probable glycine dehydrogenase (decarboxylating) subunit 1 (455 aa).

It belongs to the GcvP family. N-terminal subunit subfamily. In terms of assembly, the glycine cleavage system is composed of four proteins: P, T, L and H. In this organism, the P 'protein' is a heterodimer of two subunits.

It carries out the reaction N(6)-[(R)-lipoyl]-L-lysyl-[glycine-cleavage complex H protein] + glycine + H(+) = N(6)-[(R)-S(8)-aminomethyldihydrolipoyl]-L-lysyl-[glycine-cleavage complex H protein] + CO2. Functionally, the glycine cleavage system catalyzes the degradation of glycine. The P protein binds the alpha-amino group of glycine through its pyridoxal phosphate cofactor; CO(2) is released and the remaining methylamine moiety is then transferred to the lipoamide cofactor of the H protein. This chain is Probable glycine dehydrogenase (decarboxylating) subunit 1, found in Saccharolobus islandicus (strain Y.N.15.51 / Yellowstone #2) (Sulfolobus islandicus).